Reading from the N-terminus, the 351-residue chain is C(7)-cyclitol 7-kinase (351 aa).

It belongs to the ROK (NagC/XylR) family.

It carries out the reaction valienone + ATP = valienone 7-phosphate + ADP + H(+). The enzyme catalyses validone + ATP = validone 7-phosphate + ADP + H(+). In terms of biological role, involved in the biosynthesis of the antifungal agent validamycin A. Catalyzes the phosphorylation of valienone and validone to their 7-phosphate derivatives. This Streptomyces hygroscopicus subsp. jinggangensis (strain 5008) protein is C(7)-cyclitol 7-kinase.